The following is a 266-amino-acid chain: Glucosamine-6-phosphate deaminase (266 aa).

Aspartate 72 acts as the Proton acceptor; for enolization step in catalysis. Catalysis depends on aspartate 141, which acts as the For ring-opening step. The active-site Proton acceptor; for ring-opening step is the histidine 143. Glutamate 148 functions as the For ring-opening step in the catalytic mechanism.

It belongs to the glucosamine/galactosamine-6-phosphate isomerase family. NagB subfamily. In terms of assembly, homohexamer.

It carries out the reaction alpha-D-glucosamine 6-phosphate + H2O = beta-D-fructose 6-phosphate + NH4(+). Its pathway is amino-sugar metabolism; N-acetylneuraminate degradation; D-fructose 6-phosphate from N-acetylneuraminate: step 5/5. With respect to regulation, allosterically activated by N-acetylglucosamine 6-phosphate (GlcNAc6P). In terms of biological role, catalyzes the reversible isomerization-deamination of glucosamine 6-phosphate (GlcN6P) to form fructose 6-phosphate (Fru6P) and ammonium ion. This chain is Glucosamine-6-phosphate deaminase, found in Klebsiella pneumoniae subsp. pneumoniae (strain ATCC 700721 / MGH 78578).